A 253-amino-acid chain; its full sequence is RBPJ-interacting and tubulin-associated protein 1 (253 aa).

Disordered stretches follow at residues 30 to 89 (SPAR…KNKY), 127 to 175 (TPPA…LCVP), and 188 to 253 (HLTV…PPWK). A compositionally biased stretch (polar residues) spans 71–81 (SPSSRGSTPNL). A Nuclear localization signal motif is present at residues 81-97 (LTPRKKNKYRLIGHAPS). The segment at 112–140 (RMAVGDAAKLRTLFWTPPATPRGSHTPCP) is interaction with RBPJ/RBPSUH. The interval 140–253 (PRETPLRAIH…CPPKPKPPWK (114 aa)) is interaction with tubulin. Positions 188-228 (HLTVPSTGHPASSAPQTNGPWSPRPNTSGATVQSPLVTSKA) are enriched in polar residues.

It belongs to the RITA family. In terms of assembly, interacts with RBPJ/RBPSUH.

Its subcellular location is the cytoplasm. It localises to the nucleus. It is found in the cytoskeleton. The protein resides in the microtubule organizing center. The protein localises to the centrosome. Its function is as follows. Tubulin-binding protein that acts as a negative regulator of Notch signaling pathway. Shuttles between the cytoplasm and the nucleus and mediates the nuclear export of RBPJ/RBPSUH, thereby preventing the interaction between RBPJ/RBPSUH and NICD product of Notch proteins (Notch intracellular domain), leading to down-regulate Notch-mediated transcription. May play a role in neurogenesis. This Mus musculus (Mouse) protein is RBPJ-interacting and tubulin-associated protein 1 (Rita1).